Here is a 353-residue protein sequence, read N- to C-terminus: Stomatin-like protein 2, mitochondrial (353 aa).

Residues 1-28 (MLARAARGTGALLLRGSVQASGRVPRRA) constitute a mitochondrion transit peptide. Ser17 carries the phosphoserine; by PKC/PRKCZ modification. A Phosphotyrosine modification is found at Tyr124. The residue at position 145 (Lys145) is an N6-acetyllysine; alternate. The residue at position 145 (Lys145) is an N6-succinyllysine; alternate. Residues 215–252 (INVAEGKKQAQILASEAEKAEQINQAAGEASAVLAKAK) adopt a coiled-coil conformation. Lys233 carries the post-translational modification N6-acetyllysine. Positions 324–353 (VPGAQNSSQSRRDVQATDTSIEELGRVKLS) are disordered. At Ser330 the chain carries Phosphoserine.

It belongs to the band 7/mec-2 family. Forms homooligomers. Interacts with MFN2; may form heterooligomers. Interacts with PHB1 and PHB2; recruits them to cardiolipin-enriched mitochondrial membranes and stabilizes them. Interacts with CACNA2D2.

It localises to the cell membrane. It is found in the mitochondrion. The protein localises to the mitochondrion inner membrane. Its subcellular location is the mitochondrion intermembrane space. The protein resides in the membrane raft. It localises to the cytoplasm. It is found in the cytoskeleton. Its function is as follows. Mitochondrial protein that probably regulates the biogenesis and the activity of mitochondria. Stimulates cardiolipin biosynthesis, binds cardiolipin-enriched membranes where it recruits and stabilizes some proteins including prohibitin and may therefore act in the organization of functional microdomains in mitochondrial membranes. Through regulation of the mitochondrial function may play a role into several biological processes including cell migration, cell proliferation, T-cell activation, calcium homeostasis and cellular response to stress. May play a role in calcium homeostasis through negative regulation of calcium efflux from mitochondria. Required for mitochondrial hyperfusion a pro-survival cellular response to stress which results in increased ATP production by mitochondria. May also regulate the organization of functional domains at the plasma membrane and play a role in T-cell activation through association with the T-cell receptor signaling complex and its regulation. This Mus musculus (Mouse) protein is Stomatin-like protein 2, mitochondrial (Stoml2).